Consider the following 554-residue polypeptide: 3-(3-hydroxy-phenyl)propionate/3-hydroxycinnamic acid hydroxylase (554 aa).

FAD contacts are provided by residues 17–46 (QVAI…VVEK) and 285–295 (FRIDRVLLAGD).

It belongs to the PheA/TfdB FAD monooxygenase family. FAD is required as a cofactor.

The catalysed reaction is 3-(3-hydroxyphenyl)propanoate + NADH + O2 + H(+) = 3-(2,3-dihydroxyphenyl)propanoate + NAD(+) + H2O. It carries out the reaction (2E)-3-(3-hydroxyphenyl)prop-2-enoate + NADH + O2 + H(+) = (2E)-3-(2,3-dihydroxyphenyl)prop-2-enoate + NAD(+) + H2O. Its pathway is aromatic compound metabolism; 3-phenylpropanoate degradation. In terms of biological role, catalyzes the insertion of one atom of molecular oxygen into position 2 of the phenyl ring of 3-(3-hydroxyphenyl)propionate (3-HPP) and hydroxycinnamic acid (3HCI). The sequence is that of 3-(3-hydroxy-phenyl)propionate/3-hydroxycinnamic acid hydroxylase from Escherichia coli O8 (strain IAI1).